Consider the following 92-residue polypeptide: Probable K(+)/H(+) antiporter subunit F (92 aa).

A run of 3 helical transmembrane segments spans residues 4-24 (AVVWSVLVAQTMLALAMAFAL), 36-56 (RILGLDTLYINAMLMLITFGI), and 62-82 (VYFETALIIAVIGFASSIALA).

This sequence belongs to the CPA3 antiporters (TC 2.A.63) subunit F family. May form a hetero-oligomeric complex that consists of six subunits: PhaAB, PhaC, PhaD, PhaE, PhaF and PhaG.

It localises to the cell membrane. In terms of biological role, part of a K(+) efflux system which is required for the adaptation of R.meliloti to alkaline pH as well as for the infection process during symbiotic nodule development. In Rhizobium meliloti (strain 1021) (Ensifer meliloti), this protein is Probable K(+)/H(+) antiporter subunit F (phaF).